The following is a 68-amino-acid chain: DNA-directed RNA polymerase subunit omega (68 aa).

It belongs to the RNA polymerase subunit omega family. In terms of assembly, the RNAP catalytic core consists of 2 alpha, 1 beta, 1 beta' and 1 omega subunit. When a sigma factor is associated with the core the holoenzyme is formed, which can initiate transcription.

It catalyses the reaction RNA(n) + a ribonucleoside 5'-triphosphate = RNA(n+1) + diphosphate. Its function is as follows. Promotes RNA polymerase assembly. Latches the N- and C-terminal regions of the beta' subunit thereby facilitating its interaction with the beta and alpha subunits. The polypeptide is DNA-directed RNA polymerase subunit omega (Trichlorobacter lovleyi (strain ATCC BAA-1151 / DSM 17278 / SZ) (Geobacter lovleyi)).